A 252-amino-acid chain; its full sequence is Pyridoxine 5'-phosphate synthase (252 aa).

N12 provides a ligand contact to 3-amino-2-oxopropyl phosphate. 14–15 (DH) lines the 1-deoxy-D-xylulose 5-phosphate pocket. R23 contributes to the 3-amino-2-oxopropyl phosphate binding site. The Proton acceptor role is filled by H48. 1-deoxy-D-xylulose 5-phosphate is bound by residues R50 and H55. E75 functions as the Proton acceptor in the catalytic mechanism. 1-deoxy-D-xylulose 5-phosphate is bound at residue T105. H199 (proton donor) is an active-site residue. 3-amino-2-oxopropyl phosphate-binding positions include G200 and 221–222 (GH).

The protein belongs to the PNP synthase family. In terms of assembly, homooctamer; tetramer of dimers.

The protein localises to the cytoplasm. It catalyses the reaction 3-amino-2-oxopropyl phosphate + 1-deoxy-D-xylulose 5-phosphate = pyridoxine 5'-phosphate + phosphate + 2 H2O + H(+). It participates in cofactor biosynthesis; pyridoxine 5'-phosphate biosynthesis; pyridoxine 5'-phosphate from D-erythrose 4-phosphate: step 5/5. Catalyzes the complicated ring closure reaction between the two acyclic compounds 1-deoxy-D-xylulose-5-phosphate (DXP) and 3-amino-2-oxopropyl phosphate (1-amino-acetone-3-phosphate or AAP) to form pyridoxine 5'-phosphate (PNP) and inorganic phosphate. This Cereibacter sphaeroides (strain ATCC 17029 / ATH 2.4.9) (Rhodobacter sphaeroides) protein is Pyridoxine 5'-phosphate synthase.